Here is a 189-residue protein sequence, read N- to C-terminus: Elongation factor P (189 aa).

Lys34 is modified (N6-(3,6-diaminohexanoyl)-5-hydroxylysine).

It belongs to the elongation factor P family. Post-translationally, may be beta-lysylated on the epsilon-amino group of Lys-34 by the combined action of EpmA and EpmB, and then hydroxylated on the C5 position of the same residue by EpmC (if this protein is present). Lysylation is critical for the stimulatory effect of EF-P on peptide-bond formation. The lysylation moiety may extend toward the peptidyltransferase center and stabilize the terminal 3-CCA end of the tRNA. Hydroxylation of the C5 position on Lys-34 may allow additional potential stabilizing hydrogen-bond interactions with the P-tRNA.

The protein localises to the cytoplasm. It functions in the pathway protein biosynthesis; polypeptide chain elongation. Its function is as follows. Involved in peptide bond synthesis. Alleviates ribosome stalling that occurs when 3 or more consecutive Pro residues or the sequence PPG is present in a protein, possibly by augmenting the peptidyl transferase activity of the ribosome. Modification of Lys-34 is required for alleviation. The polypeptide is Elongation factor P (Idiomarina loihiensis (strain ATCC BAA-735 / DSM 15497 / L2-TR)).